Reading from the N-terminus, the 217-residue chain is Cytokinin riboside 5'-monophosphate phosphoribohydrolase LOG7 (217 aa).

Substrate is bound by residues E79, 97–98 (RK), 114–120 (GYGTLEE), and T126.

Belongs to the LOG family. In terms of tissue distribution, expressed in roots and shoots. Detected in the epidermis of the root elongation zone, cotyledon and leaves, in trichomes and pollen.

The protein localises to the cytoplasm. It is found in the nucleus. It catalyses the reaction N(6)-(dimethylallyl)adenosine 5'-phosphate + H2O = N(6)-dimethylallyladenine + D-ribose 5-phosphate. It carries out the reaction 9-ribosyl-trans-zeatin 5'-phosphate + H2O = trans-zeatin + D-ribose 5-phosphate. Functionally, cytokinin-activating enzyme working in the direct activation pathway. Phosphoribohydrolase that converts inactive cytokinin nucleotides to the biologically active free-base forms. In Arabidopsis thaliana (Mouse-ear cress), this protein is Cytokinin riboside 5'-monophosphate phosphoribohydrolase LOG7 (LOG7).